A 325-amino-acid chain; its full sequence is NADH-quinone oxidoreductase subunit H (325 aa).

8 helical membrane-spanning segments follow: residues 11 to 31 (ILLSILKAVVILLVVVTCGAF), 81 to 101 (VIFTLAPVIAFTSLLLAFAIV), 114 to 134 (IGILFFLMMAGLAVYAVLFAG), 154 to 174 (LSYEVFLGLSLMGVVAQAGSF), 186 to 206 (LWNVIPQFFGFVTFAIAGVAV), 237 to 257 (FFVGEYIGIVTVSALIVTLFF), 265 to 285 (LPPFIWFALKTAFFMMMFILI), and 304 to 324 (VCLPLTLVNLLVTAAVILWQA).

It belongs to the complex I subunit 1 family. NDH-1 is composed of 13 different subunits. Subunits NuoA, H, J, K, L, M, N constitute the membrane sector of the complex.

Its subcellular location is the cell inner membrane. It carries out the reaction a quinone + NADH + 5 H(+)(in) = a quinol + NAD(+) + 4 H(+)(out). NDH-1 shuttles electrons from NADH, via FMN and iron-sulfur (Fe-S) centers, to quinones in the respiratory chain. The immediate electron acceptor for the enzyme in this species is believed to be ubiquinone. Couples the redox reaction to proton translocation (for every two electrons transferred, four hydrogen ions are translocated across the cytoplasmic membrane), and thus conserves the redox energy in a proton gradient. This subunit may bind ubiquinone. This chain is NADH-quinone oxidoreductase subunit H, found in Klebsiella pneumoniae (strain 342).